Consider the following 312-residue polypeptide: Speedy protein A (312 aa).

The speedy/Ringo box; Required for CDK-binding stretch occupies residues 67–199; that stretch reads RQEMTAFFKL…SHYIWQRERS (133 aa). S221 carries the phosphoserine modification. The residue at position 223 (T223) is a Phosphothreonine.

It belongs to the Speedy/Ringo family. In terms of assembly, interacts with CDK1. Interacts with CDK2. May interact with CDKN1B/KIP1. Identified in a complex with CDK2 and CDKN1B/KIP1, where it interacts primarily with CDK2.

It localises to the nucleus. Functionally, regulates the G1/S phase transition of the cell cycle by binding and activating CDK1 and CDK2. Contributes to CDK2 activation without promoting CDK2 phosphorylation, by inducing a conformation change of the CDK2 T-loop that obstructs the substrate-binding cleft prior to kinase activation. Interferes with CDKN1B-mediated inhibition of CDK2. Mediates cell survival during the DNA damage process through activation of CDK2. The protein is Speedy protein A of Rattus norvegicus (Rat).